We begin with the raw amino-acid sequence, 468 residues long: RuvB-like helicase 2 (468 aa).

Glycine 76 to threonine 83 is an ATP binding site.

The protein belongs to the RuvB family. As to quaternary structure, may form heterododecamers with RVB1. Component of the SWR1 chromatin remodeling complex, the INO80 chromatin remodeling complex, and of the R2TP complex.

It localises to the nucleus. The catalysed reaction is ATP + H2O = ADP + phosphate + H(+). Functionally, DNA helicase which participates in several chromatin remodeling complexes, including the SWR1 and the INO80 complexes. The SWR1 complex mediates the ATP-dependent exchange of histone H2A for the H2A variant HZT1 leading to transcriptional regulation of selected genes by chromatin remodeling. The INO80 complex remodels chromatin by shifting nucleosomes and is involved in DNA repair. Also involved in pre-rRNA processing. This is RuvB-like helicase 2 (rvb2) from Emericella nidulans (strain FGSC A4 / ATCC 38163 / CBS 112.46 / NRRL 194 / M139) (Aspergillus nidulans).